The primary structure comprises 314 residues: NAC domain-containing protein 10 (314 aa).

Polar residues predominate over residues 18-39; the sequence is VSNTDHPSVQLKDQSQSCVTSR. Disordered stretches follow at residues 18 to 48 and 150 to 182; these read VSNT…SAET and YTTG…PVLS. The NAC domain occupies 77–236; the sequence is LPAGVKFDPS…EPVLSKVFYQ (160 aa). Residues 160–171 are compositionally biased toward basic and acidic residues; sequence VSTDEEGHETRW. A DNA-binding region spans residues 187–242; that stretch reads TGFKKILVLYTNYGRQKKPEKTNWVMHQYHLGSSEDEKDGEPVLSKVFYQTQPRQC.

Expressed in protoxylem and elongating interfascicular fiber cells of elongating internodes, developing metaxylem cells and interfascicular fibers of non-elongating internodes and developing secondary xylem of roots.

The protein localises to the nucleus. Transcriptional activator that plays a regulatory role in the development of secondary cell wall fibers. Is a direct target of SND1. The chain is NAC domain-containing protein 10 from Arabidopsis thaliana (Mouse-ear cress).